The following is a 205-amino-acid chain: Urease accessory protein UreG (205 aa).

14–21 lines the GTP pocket; it reads GPVGSGKT.

The protein belongs to the SIMIBI class G3E GTPase family. UreG subfamily. In terms of assembly, homodimer. UreD, UreF and UreG form a complex that acts as a GTP-hydrolysis-dependent molecular chaperone, activating the urease apoprotein by helping to assemble the nickel containing metallocenter of UreC. The UreE protein probably delivers the nickel.

The protein localises to the cytoplasm. In terms of biological role, facilitates the functional incorporation of the urease nickel metallocenter. This process requires GTP hydrolysis, probably effectuated by UreG. This chain is Urease accessory protein UreG, found in Escherichia coli O157:H7.